A 312-amino-acid polypeptide reads, in one-letter code: Homoserine O-succinyltransferase (312 aa).

Cys-142 (acyl-thioester intermediate) is an active-site residue. Substrate-binding residues include Lys-163 and Ser-192. Residue His-235 is the Proton acceptor of the active site. The active site involves Glu-237. Arg-249 contributes to the substrate binding site.

It belongs to the MetA family.

It is found in the cytoplasm. It carries out the reaction L-homoserine + succinyl-CoA = O-succinyl-L-homoserine + CoA. The protein operates within amino-acid biosynthesis; L-methionine biosynthesis via de novo pathway; O-succinyl-L-homoserine from L-homoserine: step 1/1. Its function is as follows. Transfers a succinyl group from succinyl-CoA to L-homoserine, forming succinyl-L-homoserine. In Alteromonas mediterranea (strain DSM 17117 / CIP 110805 / LMG 28347 / Deep ecotype), this protein is Homoserine O-succinyltransferase.